Reading from the N-terminus, the 840-residue chain is Probable alpha-glucuronidase A (840 aa).

The N-terminal stretch at 1-19 (MWSGIPIFALLSSIGIAAA) is a signal peptide. 13 N-linked (GlcNAc...) asparagine glycosylation sites follow: Asn50, Asn149, Asn222, Asn262, Asn279, Asn310, Asn465, Asn527, Asn576, Asn610, Asn682, Asn723, and Asn732.

The protein belongs to the glycosyl hydrolase 67 family.

The protein localises to the secreted. It catalyses the reaction an alpha-D-glucuronoside + H2O = D-glucuronate + an alcohol. In terms of biological role, alpha-glucuronidase involved in the hydrolysis of xylan, a major structural heterogeneous polysaccharide found in plant biomass representing the second most abundant polysaccharide in the biosphere, after cellulose. Releases 4-O-methylglucuronic acid from xylan. This Aspergillus fumigatus (strain CBS 144.89 / FGSC A1163 / CEA10) (Neosartorya fumigata) protein is Probable alpha-glucuronidase A (aguA).